Consider the following 130-residue polypeptide: Cyclin-dependent kinase 4 inhibitor B (130 aa).

ANK repeat units follow at residues 5 to 34, 38 to 66, 71 to 100, and 104 to 130; these read SSDA…DPNA, FGRR…EPNC, TLTR…RLDV, and WGRL…ATGD. Thr12 bears the Phosphothreonine mark.

The protein belongs to the CDKN2 cyclin-dependent kinase inhibitor family. In terms of assembly, heterodimer of CDKN2B with CDK4 or CDK6. In terms of tissue distribution, expressed ubiquitously.

Functionally, interacts strongly with CDK4 and CDK6. Potent inhibitor. Potential effector of TGF-beta induced cell cycle arrest. The chain is Cyclin-dependent kinase 4 inhibitor B (Cdkn2b) from Mus musculus (Mouse).